The following is a 100-amino-acid chain: Large ribosomal subunit protein bL27 (100 aa).

The propeptide occupies 1-9; sequence MLVMNLQLF.

It belongs to the bacterial ribosomal protein bL27 family. Post-translationally, the N-terminus is cleaved by ribosomal processing cysteine protease Prp.

The protein is Large ribosomal subunit protein bL27 of Clostridium botulinum (strain Hall / ATCC 3502 / NCTC 13319 / Type A).